Consider the following 130-residue polypeptide: Large ribosomal subunit protein bL19c (130 aa).

Belongs to the bacterial ribosomal protein bL19 family.

It localises to the plastid. The protein localises to the chloroplast. The sequence is that of Large ribosomal subunit protein bL19c (rpl19) from Chlorella vulgaris (Green alga).